The primary structure comprises 902 residues: Mitochondrial aspartate-glutamate transporter AGC1 (902 aa).

Solcar repeat units follow at residues 528 to 614, 622 to 710, and 725 to 813; these read FDSL…MRNR, LSLF…LKKD, and LKTW…FKGF. The next 6 membrane-spanning stretches (helical) occupy residues 534 to 554, 591 to 611, 622 to 642, 681 to 702, 731 to 751, and 786 to 806; these read FSLG…IDFI, GPQL…NDFM, LSLF…VIFT, GLYN…IYFP, LTAG…FDVI, and FKGG…TLAA.

The protein belongs to the mitochondrial carrier (TC 2.A.29) family.

The protein localises to the mitochondrion inner membrane. Its function is as follows. Calcium-dependent mitochondrial aspartate and glutamate carrier. Transport of glutamate in mitochondria is required for mitochondrial transamination reactions and ornithine synthesis. Plays also a role in malate-aspartate NADH shuttle, which is critical for growth on acetate and fatty acids. The protein is Mitochondrial aspartate-glutamate transporter AGC1 (AGC1) of Saccharomyces cerevisiae (strain ATCC 204508 / S288c) (Baker's yeast).